A 73-amino-acid chain; its full sequence is Translation initiation factor IF-1 (73 aa).

In terms of domain architecture, S1-like spans 1–73 (MAKKDGVIEI…NRGRIVYRYR (73 aa)).

This sequence belongs to the IF-1 family. Component of the 30S ribosomal translation pre-initiation complex which assembles on the 30S ribosome in the order IF-2 and IF-3, IF-1 and N-formylmethionyl-tRNA(fMet); mRNA recruitment can occur at any time during PIC assembly.

The protein localises to the cytoplasm. Functionally, one of the essential components for the initiation of protein synthesis. Stabilizes the binding of IF-2 and IF-3 on the 30S subunit to which N-formylmethionyl-tRNA(fMet) subsequently binds. Helps modulate mRNA selection, yielding the 30S pre-initiation complex (PIC). Upon addition of the 50S ribosomal subunit IF-1, IF-2 and IF-3 are released leaving the mature 70S translation initiation complex. The protein is Translation initiation factor IF-1 of Acidothermus cellulolyticus (strain ATCC 43068 / DSM 8971 / 11B).